The primary structure comprises 670 residues: MIIQRLFGILYMLAGLAKAFPQFENVPAVLRQAAIANQGTWYAAASIWLGAHGDVINILVGVVLFGSGVILMLNPLWTTLVIYAQLLMMAVFVVILHQSQPQVMLLDGVFALAALYMLRGQYHRKPKPRTFPTTSFSLPTPSSESSFSAPLGDEYDVVIIGGGASGLTAASEFTHERVLVLEKSSTFGGNARYHTFNRLKHPTAGVCFQEPFPGSNMLRLLKKIGLEGKYKSNEKDTLVFFDTFLLLKCLGEIVVGFIKQPRYLLKLSVWGLTSQLFLHAIIGKPYVVAAKQLGDPIFADLYTFLDKFSPRGDFYPRLPWTPNGSWSKAHMELLDNISLYTYLFEPDKLGRLPEQLRPPARLGKLVENAVSTTLRVECLDIHDVSAYVGLHFLVGYLRGNLVTLPGGNGSISAGLCKYLSHQRNVTLQNHVQLTAVEPQHNGTCIQFTINGQPRQVQAQQIIWAAPKTQLATWLPGLPAKQLAAIKNIRHEDYYLANVFLSKPVLGHSFGGYMIEPDSNKDPFSWCKAGTCLVANWMDDHADVDVGVLTLLKPTTRSERQDRTAQNAFLALQQQTYAEIAKVLRNIGIGAEVIEDIQIWYWPAGLVTSVVGQQAEGVFETARQSFENIHFANQDSVGVGNIESAILSGIDAANAVKAQLMDTENVVEVAG.

A signal peptide spans 1–19 (MIIQRLFGILYMLAGLAKA). Helical transmembrane passes span 53–73 (GDVI…ILML), 76–96 (LWTT…VVIL), 98–118 (QSQP…LYML), and 238–258 (LVFF…VGFI).

This sequence belongs to the flavin monoamine oxidase family. It depends on FAD as a cofactor.

Its subcellular location is the membrane. Its pathway is antibiotic biosynthesis; prodigiosin biosynthesis. Involved in the biosynthesis of 2-methyl-3-n-amyl-pyrrole (MAP), one of the terminal products involved in the biosynthesis of the red antibiotic prodigiosin (Pig). Catalyzes the oxidation of dihydro form of MAP (H2MAP) to yield MAP. In Serratia sp. (strain ATCC 39006) (Prodigiosinella confusarubida), this protein is Oxidoreductase PigB.